A 170-amino-acid chain; its full sequence is Acireductone dioxygenase (170 aa).

4 residues coordinate Fe(2+): H99, H101, E105, and H144. Ni(2+)-binding residues include H99, H101, E105, and H144.

Belongs to the acireductone dioxygenase (ARD) family. In terms of assembly, monomer. The cofactor is Fe(2+). Ni(2+) serves as cofactor.

It catalyses the reaction 1,2-dihydroxy-5-(methylsulfanyl)pent-1-en-3-one + O2 = 3-(methylsulfanyl)propanoate + CO + formate + 2 H(+). The catalysed reaction is 1,2-dihydroxy-5-(methylsulfanyl)pent-1-en-3-one + O2 = 4-methylsulfanyl-2-oxobutanoate + formate + 2 H(+). The protein operates within amino-acid biosynthesis; L-methionine biosynthesis via salvage pathway; L-methionine from S-methyl-5-thio-alpha-D-ribose 1-phosphate: step 5/6. Catalyzes 2 different reactions between oxygen and the acireductone 1,2-dihydroxy-3-keto-5-methylthiopentene (DHK-MTPene) depending upon the metal bound in the active site. Fe-containing acireductone dioxygenase (Fe-ARD) produces formate and 2-keto-4-methylthiobutyrate (KMTB), the alpha-ketoacid precursor of methionine in the methionine recycle pathway. Ni-containing acireductone dioxygenase (Ni-ARD) produces methylthiopropionate, carbon monoxide and formate, and does not lie on the methionine recycle pathway. This Bacillus cereus (strain ATCC 14579 / DSM 31 / CCUG 7414 / JCM 2152 / NBRC 15305 / NCIMB 9373 / NCTC 2599 / NRRL B-3711) protein is Acireductone dioxygenase.